Reading from the N-terminus, the 356-residue chain is Phospho-N-acetylmuramoyl-pentapeptide-transferase (356 aa).

The next 10 helical transmembrane spans lie at 4 to 24, 53 to 73, 76 to 96, 116 to 136, 152 to 172, 186 to 206, 228 to 248, 253 to 273, 278 to 298, and 333 to 353; these read ILLA…WFIH, GGAV…LVTW, PSIS…IGFL, LLGQ…FPDV, ISWL…LIAG, LATG…IWQF, DIAV…WWNA, IFLG…MAVV, LLLV…MLQV, and FWII…AEWV.

Belongs to the glycosyltransferase 4 family. MraY subfamily. It depends on Mg(2+) as a cofactor.

It localises to the cell membrane. It catalyses the reaction UDP-N-acetyl-alpha-D-muramoyl-L-alanyl-gamma-D-glutamyl-meso-2,6-diaminopimeloyl-D-alanyl-D-alanine + di-trans,octa-cis-undecaprenyl phosphate = di-trans,octa-cis-undecaprenyl diphospho-N-acetyl-alpha-D-muramoyl-L-alanyl-D-glutamyl-meso-2,6-diaminopimeloyl-D-alanyl-D-alanine + UMP. It functions in the pathway cell wall biogenesis; peptidoglycan biosynthesis. In terms of biological role, catalyzes the initial step of the lipid cycle reactions in the biosynthesis of the cell wall peptidoglycan: transfers peptidoglycan precursor phospho-MurNAc-pentapeptide from UDP-MurNAc-pentapeptide onto the lipid carrier undecaprenyl phosphate, yielding undecaprenyl-pyrophosphoryl-MurNAc-pentapeptide, known as lipid I. This chain is Phospho-N-acetylmuramoyl-pentapeptide-transferase, found in Cutibacterium acnes (strain DSM 16379 / KPA171202) (Propionibacterium acnes).